Consider the following 310-residue polypeptide: Ribosomal RNA small subunit methyltransferase H (310 aa).

S-adenosyl-L-methionine-binding positions include 33 to 35 (AGH), Asp53, Phe79, Asp100, and Gln107.

Belongs to the methyltransferase superfamily. RsmH family.

The protein resides in the cytoplasm. The enzyme catalyses cytidine(1402) in 16S rRNA + S-adenosyl-L-methionine = N(4)-methylcytidine(1402) in 16S rRNA + S-adenosyl-L-homocysteine + H(+). In terms of biological role, specifically methylates the N4 position of cytidine in position 1402 (C1402) of 16S rRNA. The chain is Ribosomal RNA small subunit methyltransferase H from Clostridium perfringens (strain 13 / Type A).